Reading from the N-terminus, the 281-residue chain is Very long chain fatty acid elongase 7 (281 aa).

An N-acetylalanine modification is found at Ala2. At 2–27 the chain is on the lumenal side; that stretch reads AFSDLTSRTVHLYDNWIKDADPRVED. A helical transmembrane segment spans residues 28-48; the sequence is WLLMSSPLPQTILLGFYVYFV. Over 49–72 the chain is Cytoplasmic; sequence TSLGPKLMENRKPFELKKAMITYN. The chain crosses the membrane as a helical span at residues 73-93; the sequence is FFIVLFSVYMCYEFVMSGWGI. The Lumenal segment spans residues 94 to 115; sequence GYSFRCDIVDYSRSPTALRMAR. Cys99 and Cys231 are disulfide-bonded. Residues 116–136 traverse the membrane as a helical segment; sequence TCWLYYFSKFIELLDTIFFVL. 5 residues coordinate 3-oxoeicosanoyl-CoA: Lys124, Arg137, Lys139, Gln142, and His147. Topologically, residues 137-142 are cytoplasmic; that stretch reads RKKNSQ. Residues 143 to 162 traverse the membrane as a helical segment; that stretch reads VTFLHVFHHTIMPWTWWFGV. The short motif at 147-151 is the HxxHH motif element; it reads HVFHH. His150 serves as the catalytic Nucleophile. Topologically, residues 163–171 are lumenal; the sequence is KFAAGGLGT. The helical transmembrane segment at 172-194 threads the bilayer; that stretch reads FHALLNTAVHVVMYSYYGLSALG. The 3-oxoeicosanoyl-CoA site is built by Tyr187, Lys204, Thr208, and Gln211. Topologically, residues 195 to 206 are cytoplasmic; sequence PAYQKYLWWKKY. Residues 207–227 traverse the membrane as a helical segment; the sequence is LTSLQLVQFVIVAIHISQFFF. Residues 228-236 are Lumenal-facing; sequence MEDCKYQFP. The helical transmembrane segment at 237–257 threads the bilayer; the sequence is VFACIIMSYSFMFLLLFLHFW. Topologically, residues 258–281 are cytoplasmic; it reads YRAYTKGQRLPKTVKNGTCKNKDN. Residue Arg266 coordinates 3-oxoeicosanoyl-CoA. The Di-lysine motif signature appears at 277 to 281; sequence KNKDN.

The protein belongs to the ELO family. ELOVL7 subfamily. In terms of assembly, homodimer. Interacts with TECR. In terms of tissue distribution, expressed in most tissues except heart and skeletal muscle.

Its subcellular location is the endoplasmic reticulum membrane. The catalysed reaction is a very-long-chain acyl-CoA + malonyl-CoA + H(+) = a very-long-chain 3-oxoacyl-CoA + CO2 + CoA. It carries out the reaction eicosanoyl-CoA + malonyl-CoA + H(+) = 3-oxodocosanoyl-CoA + CO2 + CoA. The enzyme catalyses (5Z,8Z,11Z,14Z)-eicosatetraenoyl-CoA + malonyl-CoA + H(+) = (7Z,10Z,13Z,16Z)-3-oxodocosatetraenoyl-CoA + CO2 + CoA. It catalyses the reaction (6Z,9Z,12Z)-octadecatrienoyl-CoA + malonyl-CoA + H(+) = (8Z,11Z,14Z)-3-oxoeicosatrienoyl-CoA + CO2 + CoA. The catalysed reaction is (9Z,12Z)-octadecadienoyl-CoA + malonyl-CoA + H(+) = (11Z,14Z)-3-oxoicosa-11,14-dienoyl-CoA + CO2 + CoA. It carries out the reaction (9Z)-octadecenoyl-CoA + malonyl-CoA + H(+) = 3-oxo-(11Z)-eicosenoyl-CoA + CO2 + CoA. The enzyme catalyses octadecanoyl-CoA + malonyl-CoA + H(+) = 3-oxoeicosanoyl-CoA + CO2 + CoA. It catalyses the reaction hexadecanoyl-CoA + malonyl-CoA + H(+) = 3-oxooctadecanoyl-CoA + CO2 + CoA. The catalysed reaction is (9Z,12Z,15Z)-octadecatrienoyl-CoA + malonyl-CoA + H(+) = (11Z,14Z,17Z)-3-oxoeicosatrienoyl-CoA + CO2 + CoA. It functions in the pathway lipid metabolism; fatty acid biosynthesis. Its function is as follows. Catalyzes the first and rate-limiting reaction of the four reactions that constitute the long-chain fatty acids elongation cycle. This endoplasmic reticulum-bound enzymatic process allows the addition of 2 carbons to the chain of long- and very long-chain fatty acids (VLCFAs) per cycle. Condensing enzyme with higher activity toward C18 acyl-CoAs, especially C18:3(n-3) acyl-CoAs and C18:3(n-6)-CoAs. Also active toward C20:4-, C18:0-, C18:1-, C18:2- and C16:0-CoAs, and weakly toward C20:0-CoA. Little or no activity toward C22:0-, C24:0-, or C26:0-CoAs. May participate in the production of saturated and polyunsaturated VLCFAs of different chain lengths that are involved in multiple biological processes as precursors of membrane lipids and lipid mediators. In Homo sapiens (Human), this protein is Very long chain fatty acid elongase 7.